Here is a 979-residue protein sequence, read N- to C-terminus: MRRPRRPGGLGGSGGLRLLLCLLLLSSRPGGCSAVSAHGCLFDRRLCSHLEVCIQDGLFGQCQVGVGQARPLLQVTSPVLQRLQGVLRQLMSQGLSWHDDLTQYVISQEMERIPRLRPPEPRPRDRSGLAPKRPGPAGELLLQDIPTGSAPAAQHRLPQPPVGKGGAGASSSLSPLQAELLPPLLEHLLLPPQPPHPSLSYEPALLQPYLFHQFGSRDGSRVSEGSPGMVSVGPLPKAEAPALFSRTASKGIFGDHPGHSYGDLPGPSPAQLFQDSGLLYLAQELPAPSRARVPRLPEQGSSSRAEDSPEGYEKEGLGDRGEKPASPAVQPDAALQRLAAVLAGYGVELRQLTPEQLSTLLTLLQLLPKGAGRNPGGVVNVGADIKKTMEGPVEGRDTAELPARTSPMPGHPTASPTSSEVQQVPSPVSSEPPKAARPPVTPVLLEKKSPLGQSQPTVAGQPSARPAAEEYGYIVTDQKPLSLAAGVKLLEILAEHVHMSSGSFINISVVGPALTFRIRHNEQNLSLADVTQQAGLVKSELEAQTGLQILQTGVGQREEAAAVLPQTAHSTSPMRSVLLTLVALAGVAGLLVALAVALCVRQHARQQDKERLAALGPEGAHGDTTFEYQDLCRQHMATKSLFNRAEGPPEPSRVSSVSSQFSDAAQASPSSHSSTPSWCEEPAQANMDISTGHMILAYMEDHLRNRDRLAKEWQALCAYQAEPNTCATAQGEGNIKKNRHPDFLPYDHARIKLKVESSPSRSDYINASPIIEHDPRMPAYIATQGPLSHTIADFWQMVWESGCTVIVMLTPLVEDGVKQCDRYWPDEGASLYHVYEVNLVSEHIWCEDFLVRSFYLKNVQTQETRTLTQFHFLSWPAEGTPASTRPLLDFRRKVNKCYRGRSCPIIVHCSDGAGRTGTYILIDMVLNRMAKGVKEIDIAATLEHVRDQRPGLVRSKDQFEFALTAVAEEVNAILKALPQ.

The signal sequence occupies residues 1–34 (MRRPRRPGGLGGSGGLRLLLCLLLLSSRPGGCSA). Residues 35–131 (VSAHGCLFDR…RPRDRSGLAP (97 aa)) are RESP18 homology domain. Residues 35-575 (VSAHGCLFDR…QTAHSTSPMR (541 aa)) lie on the Lumenal side of the membrane. Cysteines 53 and 62 form a disulfide. Composition is skewed to basic and acidic residues over residues 112 to 127 (RIPRLRPPEPRPRDRS) and 304 to 323 (RAEDSPEGYEKEGLGDRGEK). Disordered stretches follow at residues 112 to 173 (RIPR…SSSL), 289 to 329 (SRAR…SPAV), and 393 to 439 (VEGR…ARPP). Serine 308 carries the post-translational modification Phosphoserine. Residues 415–433 (SPTSSEVQQVPSPVSSEPP) are compositionally biased toward low complexity. Threonine 441 carries an O-linked (GalNAc...) threonine glycan. The segment at 449 to 575 (SPLGQSQPTV…QTAHSTSPMR (127 aa)) is sufficient for dimerization of proICA512. N-linked (GlcNAc...) asparagine glycans are attached at residues asparagine 506 and asparagine 524. A helical transmembrane segment spans residues 576–600 (SVLLTLVALAGVAGLLVALAVALCV). Residues 601–732 (RQHARQQDKE…PNTCATAQGE (132 aa)) are sufficient for dimerization of proICA512. Residues 601 to 979 (RQHARQQDKE…VNAILKALPQ (379 aa)) are Cytoplasmic-facing. The tract at residues 643–680 (NRAEGPPEPSRVSSVSSQFSDAAQASPSSHSSTPSWCE) is disordered. Low complexity predominate over residues 652–677 (SRVSSVSSQFSDAAQASPSSHSSTPS). One can recognise a Tyrosine-protein phosphatase domain in the interval 709 to 969 (LAKEWQALCA…EFALTAVAEE (261 aa)). Lysine 754 is covalently cross-linked (Glycyl lysine isopeptide (Lys-Gly) (interchain with G-Cter in SUMO)).

This sequence belongs to the protein-tyrosine phosphatase family. Receptor class 8 subfamily. In terms of assembly, homodimer; shown for the unprocessed protein (proICA512) in the endoplasmic reticulum and resolved during protein maturation as ICA512-TMF seems to be predominantly monomeric in secretory granules; however, ICA512-CCF interacts with ICA512-TMF disrupting the ICA512-TMF:SNTB2 complex. The isolated lumenal RESP18 homology domain has been shown to form disulfide-linked homooligomers. Interacts (via cytoplasmic domain) with phosphorylated SNTB2; this protects PTPRN against cleavage by CAPN1 to produce ICA512-CCF. Dephosphorylation of SNTB2 upon insulin stimulation disrupts the interaction and results in PTPRN cleavage. Interacts with SNX19. ICA512-CCF interacts with PIAS4; in the nucleus. Interacts with STAT5B (phosphorylated); down-regulated by ICA512-CCF sumoylation; ICA512-CCF prevents STAT5B dephosphorylation; ICA512-CCF mediates interaction of STAT5B with PIAS4. Interacts (via RESP18 homology domain) with insulin and proinsulin. Interacts with PTPRN2, PTPRA and PTPRE. Post-translationally, N-glycosylated. In terms of processing, O-glycosylated with core 1 or possibly core 8 glycans. Subject to proteolytic cleavage at multiple sites. Subject to cleavage on a pair of basic residues. On exocytosis of secretory granules in pancreatic beta-cells ICA512-TMF is transiently inserted in the plasma-membrane and cleaved by mu-type calpain CPN1 to yield ICA512-CCF. Post-translationally, sumoylated at two sites including Lys-754. Sumoylation decreases interaction with STAT5. Expression is restricted to neuroendocrine cells. Found in pancreas, brain and pituitary.

The protein resides in the membrane. The protein localises to the cytoplasmic vesicle. Its subcellular location is the secretory vesicle membrane. It is found in the perikaryon. It localises to the cell projection. The protein resides in the axon. The protein localises to the synapse. Its subcellular location is the cell membrane. It is found in the endosome. It localises to the nucleus. Its function is as follows. Plays a role in vesicle-mediated secretory processes. Required for normal accumulation of secretory vesicles in hippocampus, pituitary and pancreatic islets. Required for the accumulation of normal levels of insulin-containing vesicles and preventing their degradation. Plays a role in insulin secretion in response to glucose stimuli. Required for normal accumulation of the neurotransmitters norepinephrine, dopamine and serotonin in the brain. In females, but not in males, required for normal accumulation and secretion of pituitary hormones, such as luteinizing hormone (LH) and follicle-stimulating hormone (FSH). Required to maintain normal levels of renin expression and renin release. Seems to lack intrinsic enzyme activity. May regulate catalytic active protein-tyrosine phosphatases such as PTPRA through dimerization. In terms of biological role, ICA512-TMF regulates dynamics and exocytosis of insulin secretory granules (SGs); binding of ICA512-TMF to SNTB2/beta-2-syntrophin is proposed to restrain SGs mobility and exocytosis by tethering them to the actin cytoskeleton depending on UTRN; the function is inhibited by cytoplasmic ICA512-CFF dimerizing with ICA512-TMF and displacing SNTB2. Functionally, ICA512-CCF translocated to the nucleus promotes expression of insulin and other granule-related genes; the function implicates binding to and regulating activity of STAT5B probably by preventing its dephosphorylation and potentially by inducing its sumoylation by recruiting PIAS4. Enhances pancreatic beta-cell proliferation by converging with signaling by STAT5B and STAT3. ICA512-CCF located in the cytoplasm regulates dynamics and exocytosis of insulin secretory granules (SGs) by dimerizing with ICA512-TMF and displacing SNTB2 thus enhancing SGs mobility and exocytosis. The protein is Receptor-type tyrosine-protein phosphatase-like N (PTPRN) of Homo sapiens (Human).